The primary structure comprises 401 residues: 8-amino-7-oxononanoate synthase (401 aa).

Position 19 (R19) interacts with substrate. Residue 106–107 (GY) coordinates pyridoxal 5'-phosphate. Residue H131 participates in substrate binding. S176, H204, and T233 together coordinate pyridoxal 5'-phosphate. At K236 the chain carries N6-(pyridoxal phosphate)lysine. T350 lines the substrate pocket.

Belongs to the class-II pyridoxal-phosphate-dependent aminotransferase family. BioF subfamily. Homodimer. Pyridoxal 5'-phosphate is required as a cofactor.

The enzyme catalyses 6-carboxyhexanoyl-[ACP] + L-alanine + H(+) = (8S)-8-amino-7-oxononanoate + holo-[ACP] + CO2. Its pathway is cofactor biosynthesis; biotin biosynthesis. Catalyzes the decarboxylative condensation of pimeloyl-[acyl-carrier protein] and L-alanine to produce 8-amino-7-oxononanoate (AON), [acyl-carrier protein], and carbon dioxide. This chain is 8-amino-7-oxononanoate synthase, found in Pseudomonas aeruginosa (strain ATCC 15692 / DSM 22644 / CIP 104116 / JCM 14847 / LMG 12228 / 1C / PRS 101 / PAO1).